The primary structure comprises 396 residues: Probable sugar efflux transporter (396 aa).

Transmembrane regions (helical) follow at residues 15–35 (VVTLAVAAFIFNTTEFVPVGL), 50–70 (VGIMLTIYAWVVALMSLPFML), 81–101 (LICLFVVFIASHVLSFLSWSF), 103–123 (VLVISRIGVAFAHAIFWSITA), 136–156 (AQALSLIATGTALAMVLGLPL), 170–190 (FFAIGIGAFITLLCLIKLLPL), 209–229 (PALMSIYLLTVVVVTAHYTAY), 246–266 (FATALLLLLGGAGIIGSVIFG), 275–295 (ALVSTAIALLLVCLALLLPAA), 299–319 (IHLGVLSIFWGIAMMIIGLGM), 333–353 (VAMALFSGIFNIGIGAGALVG), and 364–384 (MIGYVGAVPAFAALIWSIIIF).

It belongs to the major facilitator superfamily. SotB (TC 2.A.1.2) family.

The protein localises to the cell inner membrane. In terms of biological role, involved in the efflux of sugars. The physiological role may be the reduction of the intracellular concentration of toxic sugars or sugar metabolites. This Escherichia coli O17:K52:H18 (strain UMN026 / ExPEC) protein is Probable sugar efflux transporter.